The following is a 288-amino-acid chain: Phosphatidate cytidylyltransferase (288 aa).

The next 7 helical transmembrane spans lie at Ile-10 to Leu-30, Pro-52 to Thr-72, Leu-89 to Pro-109, Asn-118 to Leu-138, Gly-152 to Phe-172, Trp-192 to Phe-212, and Ile-223 to Thr-243.

It belongs to the CDS family.

The protein localises to the cell inner membrane. It carries out the reaction a 1,2-diacyl-sn-glycero-3-phosphate + CTP + H(+) = a CDP-1,2-diacyl-sn-glycerol + diphosphate. Its pathway is phospholipid metabolism; CDP-diacylglycerol biosynthesis; CDP-diacylglycerol from sn-glycerol 3-phosphate: step 3/3. The protein is Phosphatidate cytidylyltransferase (cdsA) of Haemophilus influenzae (strain ATCC 51907 / DSM 11121 / KW20 / Rd).